Here is an 879-residue protein sequence, read N- to C-terminus: Translation initiation factor IF-2 (879 aa).

Residues Glu48–Arg261 are disordered. The span at Pro82–Ala111 shows a compositional bias: low complexity. Pro residues-rich tracts occupy residues Pro119–Pro142, Ser152–Val163, and Pro173–Pro197. The segment covering Ala198 to Pro213 has biased composition (low complexity). Gly residues predominate over residues Pro228–Pro246. Residues Ser251–Arg260 show a composition bias toward basic residues. The tr-type G domain occupies Pro372–Leu543. Positions Gly381–Thr388 are G1. GTP is bound at residue Gly381–Thr388. The segment at Gly406–His410 is G2. Positions Asp431–Gly434 are G3. Residues Asp431–His435 and Asn485–Asp488 each bind GTP. The G4 stretch occupies residues Asn485–Asp488. Positions Ser521–Leu523 are G5.

Belongs to the TRAFAC class translation factor GTPase superfamily. Classic translation factor GTPase family. IF-2 subfamily.

It is found in the cytoplasm. In terms of biological role, one of the essential components for the initiation of protein synthesis. Protects formylmethionyl-tRNA from spontaneous hydrolysis and promotes its binding to the 30S ribosomal subunits. Also involved in the hydrolysis of GTP during the formation of the 70S ribosomal complex. The protein is Translation initiation factor IF-2 of Acidothermus cellulolyticus (strain ATCC 43068 / DSM 8971 / 11B).